Consider the following 435-residue polypeptide: Glycine reductase complex component B subunit gamma (435 aa).

Sec-350 is a catalytic residue. Position 350 (Sec-350) is a non-standard amino acid, selenocysteine.

Belongs to the GrdB/GrdF/GrdH family. Heterohexamer of two alpha, two beta and two gamma subunits. Component of the glycine reductase complex, together with components A and C. PB is substrate specific.

It catalyses the reaction acetyl phosphate + [thioredoxin]-disulfide + NH4(+) + H2O = [thioredoxin]-dithiol + glycine + phosphate + H(+). Functionally, in the first step of glycine reductase, the substrate is bound to component PB via a Schiff base intermediate. Then the PB-activated substrate is nucleophilically attacked by the selenol anion of component PA to transform it to a carboxymethylated selenoether and the respective amine. By action of component PC, acetyl phosphate is formed, leaving component PA in its oxidized state. Finally component PA becomes reduced by the thioredoxin system to start a new catalytic cycle of reductive deamination. The chain is Glycine reductase complex component B subunit gamma (grdB) from Carboxydothermus hydrogenoformans (strain ATCC BAA-161 / DSM 6008 / Z-2901).